Here is a 349-residue protein sequence, read N- to C-terminus: tRNA pseudouridine synthase D (349 aa).

Position 27 (Phe27) interacts with substrate. Asp80 serves as the catalytic Nucleophile. Residue Asn129 coordinates substrate. One can recognise a TRUD domain in the interval 155-303 (GVPNYFGAQR…VEAARRAMLL (149 aa)). Residue Phe329 coordinates substrate.

The protein belongs to the pseudouridine synthase TruD family.

The catalysed reaction is uridine(13) in tRNA = pseudouridine(13) in tRNA. Functionally, responsible for synthesis of pseudouridine from uracil-13 in transfer RNAs. In Escherichia coli O6:K15:H31 (strain 536 / UPEC), this protein is tRNA pseudouridine synthase D.